Reading from the N-terminus, the 147-residue chain is DNA-directed RNA polymerase subunit 6 homolog (147 aa).

A disordered region spans residues 20–39 (ETEEENFVDSEEESEDKDEI).

It belongs to the archaeal RpoK/eukaryotic RPB6 RNA polymerase subunit family. In terms of assembly, part of the viral DNA-directed RNA polymerase that consists of 8 polII-like subunits (RPB1, RPB2, RPB3, RPB5, RPB6, RPB7, RPB9, RPB10), a capping enzyme and a termination factor.

Its subcellular location is the host cytoplasm. The protein localises to the virion. Functionally, component of the DNA-directed RNA polymerase (RNAP) that catalyzes the transcription in the cytoplasm of viral DNA into RNA using the four ribonucleoside triphosphates as substrates. The chain is DNA-directed RNA polymerase subunit 6 homolog from Ornithodoros (relapsing fever ticks).